The sequence spans 226 residues: Cytidylate kinase (226 aa).

Position 10–18 (G10–T18) interacts with ATP.

Belongs to the cytidylate kinase family. Type 1 subfamily.

Its subcellular location is the cytoplasm. The enzyme catalyses CMP + ATP = CDP + ADP. The catalysed reaction is dCMP + ATP = dCDP + ADP. The protein is Cytidylate kinase of Streptococcus pyogenes serotype M5 (strain Manfredo).